Reading from the N-terminus, the 262-residue chain is Acyl-[acyl-carrier-protein]--UDP-N-acetylglucosamine O-acyltransferase (262 aa).

It belongs to the transferase hexapeptide repeat family. LpxA subfamily. Homotrimer.

Its subcellular location is the cytoplasm. The catalysed reaction is a (3R)-hydroxyacyl-[ACP] + UDP-N-acetyl-alpha-D-glucosamine = a UDP-3-O-[(3R)-3-hydroxyacyl]-N-acetyl-alpha-D-glucosamine + holo-[ACP]. Its pathway is glycolipid biosynthesis; lipid IV(A) biosynthesis; lipid IV(A) from (3R)-3-hydroxytetradecanoyl-[acyl-carrier-protein] and UDP-N-acetyl-alpha-D-glucosamine: step 1/6. Functionally, involved in the biosynthesis of lipid A, a phosphorylated glycolipid that anchors the lipopolysaccharide to the outer membrane of the cell. In Salmonella schwarzengrund (strain CVM19633), this protein is Acyl-[acyl-carrier-protein]--UDP-N-acetylglucosamine O-acyltransferase.